The chain runs to 400 residues: Lipid-A-disaccharide synthase (400 aa).

This sequence belongs to the LpxB family.

The enzyme catalyses a lipid X + a UDP-2-N,3-O-bis[(3R)-3-hydroxyacyl]-alpha-D-glucosamine = a lipid A disaccharide + UDP + H(+). Its pathway is bacterial outer membrane biogenesis; LPS lipid A biosynthesis. Functionally, condensation of UDP-2,3-diacylglucosamine and 2,3-diacylglucosamine-1-phosphate to form lipid A disaccharide, a precursor of lipid A, a phosphorylated glycolipid that anchors the lipopolysaccharide to the outer membrane of the cell. This chain is Lipid-A-disaccharide synthase, found in Acidobacterium capsulatum (strain ATCC 51196 / DSM 11244 / BCRC 80197 / JCM 7670 / NBRC 15755 / NCIMB 13165 / 161).